Here is a 365-residue protein sequence, read N- to C-terminus: 3-dehydroquinate synthase (365 aa).

Residues 107 to 111 (GVIGD), 131 to 132 (TT), K144, and K153 contribute to the NAD(+) site. Zn(2+) is bound by residues E186, H251, and H268.

This sequence belongs to the sugar phosphate cyclases superfamily. Dehydroquinate synthase family. Co(2+) is required as a cofactor. Requires Zn(2+) as cofactor. The cofactor is NAD(+).

The protein localises to the cytoplasm. It carries out the reaction 7-phospho-2-dehydro-3-deoxy-D-arabino-heptonate = 3-dehydroquinate + phosphate. The protein operates within metabolic intermediate biosynthesis; chorismate biosynthesis; chorismate from D-erythrose 4-phosphate and phosphoenolpyruvate: step 2/7. In terms of biological role, catalyzes the conversion of 3-deoxy-D-arabino-heptulosonate 7-phosphate (DAHP) to dehydroquinate (DHQ). The protein is 3-dehydroquinate synthase of Picosynechococcus sp. (strain ATCC 27264 / PCC 7002 / PR-6) (Agmenellum quadruplicatum).